The primary structure comprises 336 residues: Tryptophan--tRNA ligase (336 aa).

Residues 9–11 (QPS) and 17–18 (GN) contribute to the ATP site. The 'HIGH' region signature appears at 10-18 (PSGTPTIGN). Asp134 lines the L-tryptophan pocket. Residues 146–148 (GDD), Ile189, and 198–202 (KMSKS) contribute to the ATP site. Positions 198–202 (KMSKS) match the 'KMSKS' region motif.

Belongs to the class-I aminoacyl-tRNA synthetase family. As to quaternary structure, homodimer.

The protein localises to the cytoplasm. The catalysed reaction is tRNA(Trp) + L-tryptophan + ATP = L-tryptophyl-tRNA(Trp) + AMP + diphosphate + H(+). Its function is as follows. Catalyzes the attachment of tryptophan to tRNA(Trp). The protein is Tryptophan--tRNA ligase of Enterococcus faecalis (strain ATCC 700802 / V583).